The chain runs to 84 residues: UPF0457 protein BALH_2270 (84 aa).

Belongs to the UPF0457 family.

The polypeptide is UPF0457 protein BALH_2270 (Bacillus thuringiensis (strain Al Hakam)).